The primary structure comprises 463 residues: Cysteine--tRNA ligase (463 aa).

C29 is a Zn(2+) binding site. Positions P31–N41 match the 'HIGH' region motif. C211, H236, and E240 together coordinate Zn(2+). Residues K269–S273 carry the 'KMSKS' region motif. K272 serves as a coordination point for ATP.

The protein belongs to the class-I aminoacyl-tRNA synthetase family. As to quaternary structure, monomer. It depends on Zn(2+) as a cofactor.

The protein localises to the cytoplasm. The enzyme catalyses tRNA(Cys) + L-cysteine + ATP = L-cysteinyl-tRNA(Cys) + AMP + diphosphate. The protein is Cysteine--tRNA ligase of Caulobacter vibrioides (strain ATCC 19089 / CIP 103742 / CB 15) (Caulobacter crescentus).